Consider the following 103-residue polypeptide: Small ribosomal subunit protein uS10 (103 aa).

It belongs to the universal ribosomal protein uS10 family. Part of the 30S ribosomal subunit.

Involved in the binding of tRNA to the ribosomes. The polypeptide is Small ribosomal subunit protein uS10 (Laribacter hongkongensis (strain HLHK9)).